The sequence spans 131 residues: RutC family protein YjgH (131 aa).

Belongs to the RutC family.

In Escherichia coli (strain K12), this protein is RutC family protein YjgH (yjgH).